The chain runs to 341 residues: Putative methyltransferase YGR283C (341 aa).

Belongs to the class IV-like SAM-binding methyltransferase superfamily.

It localises to the nucleus. It is found in the nucleolus. In Saccharomyces cerevisiae (strain ATCC 204508 / S288c) (Baker's yeast), this protein is Putative methyltransferase YGR283C.